We begin with the raw amino-acid sequence, 341 residues long: Glucokinase (341 aa).

18–23 is a binding site for ATP; the sequence is GDIGGT.

It belongs to the bacterial glucokinase family.

It is found in the cytoplasm. It catalyses the reaction D-glucose + ATP = D-glucose 6-phosphate + ADP + H(+). This is Glucokinase from Rhizobium etli (strain CIAT 652).